The primary structure comprises 999 residues: Bifunctional glutamine synthetase adenylyltransferase/adenylyl-removing enzyme (999 aa).

Residues 1-483 form an adenylyl removase region; sequence MTPGRRSSTF…LHEKLFYRPL (483 aa). The adenylyl transferase stretch occupies residues 489-999; that stretch reads QLAPGEARLS…RTVVEDLFYA (511 aa).

It belongs to the GlnE family. It depends on Mg(2+) as a cofactor.

It catalyses the reaction [glutamine synthetase]-O(4)-(5'-adenylyl)-L-tyrosine + phosphate = [glutamine synthetase]-L-tyrosine + ADP. The catalysed reaction is [glutamine synthetase]-L-tyrosine + ATP = [glutamine synthetase]-O(4)-(5'-adenylyl)-L-tyrosine + diphosphate. Its function is as follows. Adenylation and deadenylation of glutamate--ammonia ligase. In terms of biological role, involved in the regulation of glutamine synthetase GlnA, a key enzyme in the process to assimilate ammonia. When cellular nitrogen levels are high, the C-terminal adenylyl transferase (AT) inactivates GlnA by covalent transfer of an adenylyl group from ATP to specific tyrosine residue of GlnA, thus reducing its activity. Conversely, when nitrogen levels are low, the N-terminal adenylyl removase (AR) activates GlnA by removing the adenylyl group by phosphorolysis, increasing its activity. The regulatory region of GlnE binds the signal transduction protein PII (GlnB) which indicates the nitrogen status of the cell. This Streptomyces coelicolor (strain ATCC BAA-471 / A3(2) / M145) protein is Bifunctional glutamine synthetase adenylyltransferase/adenylyl-removing enzyme.